The following is a 477-amino-acid chain: Peroxisome proliferator-activated receptor gamma (477 aa).

Ser87 bears the Phosphoserine; by MAPK mark. A DNA-binding region (nuclear receptor) is located at residues 110-184 (AIECRVCGDK…VGMSHNAIRF (75 aa)). NR C4-type zinc fingers lie at residues 113–133 (CRVC…CEGC) and 150–172 (CDLN…FQKC). The tract at residues 231–281 (TKAKAPGHPDGQSHRQNSRGYTRHELADDGGGSDQGAVREPRAEQGGGDSN) is disordered. Residues 252–475 (TRHELADDGG…HPLLQEIYKD (224 aa)) enclose the NR LBD domain. Positions 467 to 475 (PLLQEIYKD) match the 9aaTAD motif.

The protein belongs to the nuclear hormone receptor family. NR1 subfamily. In terms of assembly, heterodimer with the retinoid X receptor. Expressed mainly in adipose tissue and kidney.

The protein resides in the nucleus. It is found in the cytoplasm. Receptor that binds peroxisome proliferators such as hypolipidemic drugs and fatty acids. Once activated by a ligand, the receptor binds to a promoter element in the gene for acyl-CoA oxidase and activates its transcription. It therefore controls the peroxisomal beta-oxidation pathway of fatty acids. Key regulator of adipocyte differentiation and glucose homeostasis. May play a role in the regulation of circadian rhythm. The polypeptide is Peroxisome proliferator-activated receptor gamma (pparg) (Xenopus laevis (African clawed frog)).